A 171-amino-acid chain; its full sequence is Large ribosomal subunit protein bL9 (171 aa).

This sequence belongs to the bacterial ribosomal protein bL9 family.

Binds to the 23S rRNA. The sequence is that of Large ribosomal subunit protein bL9 from Rickettsia canadensis (strain McKiel).